Consider the following 737-residue polypeptide: MENETHYAEAVIDNGTFGTRTIRFETGRLAKQAAGSAVAYLDDDTMVLSATTASKRPKDNLDFFPLTVDVEERQYAAGKIPGSFFRREGRPSEDAILTCRLIDRPLRPSFKKGLRNEIQIVETIMALNPDHLYDVVAINAASCSTILAGLPFSGPIGATRVALIKGQWVAFPTHTELEDAVFDMVVAGRVLEDGDVAIMMVEAEATEKTIQLVKDGAEAPTEEIVAAGLDAAKPFIKALCKAQSDLASKAAKPVGEFPVFLDYQDDVFEALAKAVTSELKQALTIAGKQDREAELDRVKEIAAEKLLPAFEGREKEISAAYRSLTKQLVRERVIKDKVRIDGRGVTDIRTLAAEVEAIPRVHGSALFERGETQILGVTTLNMLRMEQQLDTLSPVTRKRYMHNYNFPPYSVGETGRVGSPKRREIGHGALAERAIVPVLPTREEFPYAIRQVSEALGSNGSTSMGSVCASTMSLLNAGVPLKAAVAGIAMGLISQEIDGKTHYVALTDILGAEDAFGDMDFKVAGTKQFVTALQLDTKLDGIPASVLAAALKQARDARLHILDVMNEAIDVPDEMSPNAPRIITVKIPVDKIGEVIGPKGKMINQIQEDTGADITIEDDGTIYIGAQAGSQAEAARATINAIANPTMPEVGERYLGTVVKTTTFGAFVSLMPGKDGLLHISQIRKLAGGKRVENVEDVLGVGAKVQVEIAEIDSRGKLSLIPVIEGEEDEKKDDTDK.

Mg(2+)-binding residues include Asp-514 and Asp-520. Positions 580–639 (PRIITVKIPVDKIGEVIGPKGKMINQIQEDTGADITIEDDGTIYIGAQAGSQAEAARATI) constitute a KH domain. One can recognise an S1 motif domain in the interval 651–723 (GERYLGTVVK…SRGKLSLIPV (73 aa)).

The protein belongs to the polyribonucleotide nucleotidyltransferase family. The cofactor is Mg(2+).

It localises to the cytoplasm. It catalyses the reaction RNA(n+1) + phosphate = RNA(n) + a ribonucleoside 5'-diphosphate. Involved in mRNA degradation. Catalyzes the phosphorolysis of single-stranded polyribonucleotides processively in the 3'- to 5'-direction. The chain is Polyribonucleotide nucleotidyltransferase from Streptomyces griseus subsp. griseus (strain JCM 4626 / CBS 651.72 / NBRC 13350 / KCC S-0626 / ISP 5235).